A 108-amino-acid polypeptide reads, in one-letter code: Glutaredoxin-1 (108 aa).

The 104-residue stretch at 3-106 (EEFVQQRLTN…DILSSIGVLR (104 aa)) folds into the Glutaredoxin domain. The cysteines at positions 23 and 26 are disulfide-linked.

It belongs to the glutaredoxin family.

The protein localises to the virion. Its function is as follows. Displays thioltransferase and dehydroascorbate reductase activities. The sequence is that of Glutaredoxin-1 (OPG075) from Variola virus (isolate Human/India/Ind3/1967) (VARV).